Consider the following 218-residue polypeptide: Small ribosomal subunit protein uS3c (218 aa).

Residues 47 to 118 (VQKNMKTSSG…KLNIAITRIE (72 aa)) form the KH type-2 domain.

Belongs to the universal ribosomal protein uS3 family. As to quaternary structure, part of the 30S ribosomal subunit.

It is found in the plastid. The protein resides in the chloroplast. In Lactuca sativa (Garden lettuce), this protein is Small ribosomal subunit protein uS3c (rps3).